Reading from the N-terminus, the 49-residue chain is Large ribosomal subunit protein bL36 (49 aa).

The protein belongs to the bacterial ribosomal protein bL36 family.

This is Large ribosomal subunit protein bL36 from Pseudomonas fluorescens (strain ATCC BAA-477 / NRRL B-23932 / Pf-5).